The sequence spans 474 residues: PRAME family member 13 (474 aa).

Residues 97 to 124 form an LRR 1; degenerate repeat; it reads RRKLQVLDLRDVDENFWARWPGAWALSC. One copy of the LRR 2; degenerate repeat lies at 179-203; sequence HLCCSKLVNYLTPIKHLRKSLKIIY. Residues 204-230 form an LRR 3; degenerate repeat; the sequence is LNSIQELEIHNMSWPRLIRKLRCYLKE. Residues 231–265 form an LRR 4; degenerate repeat; sequence MKTLGKLVFSRCHHSTSDNELEGRLVTKFSSVFLG. LRR repeat units follow at residues 266–291, 292–323, 324–342, 348–375, and 376–400; these read LEHLQLLKIKLITFFSGHLEQLIRCL, QNPLENLELTYGYLLEEDVKCLSQYPSLGYLK, HLNLSYVLLFRISLEPLGA, AASLETLILEGCQIHYSQLSAILPGLSR, and CSQLTTFYFGRNCMSMGALKDLLRH.

The protein belongs to the PRAME family.

The polypeptide is PRAME family member 13 (Homo sapiens (Human)).